The following is a 355-amino-acid chain: Probable NADPH-dependent quinone reductase tdiC (355 aa).

It belongs to the zinc-containing alcohol dehydrogenase family. NADPH is required as a cofactor.

The protein operates within secondary metabolite biosynthesis. Probable NADPH-dependent quinone reductase; part of the gene cluster that mediates the biosynthesis of terrequinone A, an antitumor agent. The first step in the biosynthetic pathway for terrequinone A is formation of indole pyruvic acid (IPA) from L-tryptophan by the aminotransferase tdiD. The nonribosomal peptide synthase tdiA then immediately converts unstable IPA to didemethylasterriquinone D (DDAQ D), via condensation of 2 IPA molecules. The symmetric connectivity of the 2 IPA molecules is thought to arise by head-to-tail dual Claisen condensations facilitated by the TE domain. TdiB then catalyzes reverse prenylation by transferring dimethylallyl diphosphate to carbon atom 2' of DDAQ D, to yield asterriquinone C-1. Finally, tdiC and tdiE enzymes robustly convert asterriquinone C-1 to terrequinone A via a transformation involving regular prenylation at carbon atom 5, which requires elimination of the hydroxy group on C-5. The sequence is that of Probable NADPH-dependent quinone reductase tdiC from Emericella nidulans (strain FGSC A4 / ATCC 38163 / CBS 112.46 / NRRL 194 / M139) (Aspergillus nidulans).